The chain runs to 1281 residues: Dynactin subunit 1 (1281 aa).

A disordered region spans residues M1 to P26. The span at S10 to A22 shows a compositional bias: polar residues. One can recognise a CAP-Gly domain in the interval G48–R90. Positions G100–R221 are disordered. Positions D102 to S114 are enriched in polar residues. Phosphothreonine occurs at positions 108, 145, 146, and 147. Basic residues predominate over residues S129–P152. A compositionally biased stretch (low complexity) spans A161–G205. Residue S179 is modified to Phosphoserine; by PLK1. S212 is subject to Phosphoserine; by CDK1. 3 coiled-coil regions span residues S214–Q547, L943–R1049, and S1185–V1214. Residues E911–S1281 form an interaction with HPS6 region.

The protein belongs to the dynactin 150 kDa subunit family. As to quaternary structure, monomer and homodimer. Subunit of dynactin, a multiprotein complex part of a tripartite complex with dynein and a adapter, such as BICDL1, BICD2 or HOOK3. The dynactin complex is built around ACTR1A/ACTB filament and consists of an actin-related filament composed of a shoulder domain, a pointed end and a barbed end. Its length is defined by its flexible shoulder domain. The soulder is composed of 2 DCTN1 subunits, 4 DCTN2 and 2 DCTN3. DCTN1/p150(glued) binds directly to microtubules and to cytoplasmic dynein. The 4 DCNT2 (via N-terminus) bind the ACTR1A filament and act as molecular rulers to determine the length. The pointed end is important for binding dynein-dynactin cargo adapters. Consists of 4 subunits: ACTR10, DCNT4, DCTN5 and DCTN6. The barbed end is composed of a CAPZA1:CAPZB heterodimers, which binds ACTR1A/ACTB filament and dynactin and stabilizes dynactin. Interacts with the C-terminus of MAPRE1, MAPRE2 and MAPRE3. Interacts with FBXL5. Interacts with ECPAS. Interacts with CLIP1. Interacts with CLN3 and DYNAP. Interacts with MISP; this interaction regulates its distribution at the cell cortex. Interacts with CEP131. Interacts with CEP126. Interacts with dynein intermediate chain and dynein heavy chain. Interacts with PLK1 (via POLO-box domain). Interacts with TBCB and PARD6A. Binds preferentially to tyrosinated microtubules than to detyrosinated microtubules. Interacts with KIF3A. Interacts with HPS6. Interacts with SNX6. Interacts with BICD2. Interacts with DST (isoform 1). Identified in a complex with MREG and RILP. Interacts with BCCIP. Interacts with DCDC1. Interacts with AKNA. Interacts with DYNC1I2. Interacts with RUFY3 and RUFY4. Ubiquitinated by a SCF complex containing FBXL5, leading to its degradation by the proteasome. In terms of processing, phosphorylation by SLK at Thr-145, Thr-146 and Thr-147 targets DCTN1 to the centrosome. It is uncertain if SLK phosphorylates all three threonines or one or two of them. PLK1-mediated phosphorylation at Ser-179 is essential for its localization in the nuclear envelope and promotes its dissociation from microtubules during early mitosis and positively regulates nuclear envelope breakdown during prophase.

The protein localises to the cytoplasm. It localises to the cytoskeleton. The protein resides in the microtubule organizing center. Its subcellular location is the centrosome. It is found in the centriole. The protein localises to the spindle. It localises to the nucleus envelope. The protein resides in the cell cortex. Functionally, part of the dynactin complex that activates the molecular motor dynein for ultra-processive transport along microtubules. Plays a key role in dynein-mediated retrograde transport of vesicles and organelles along microtubules by recruiting and tethering dynein to microtubules. Binds to both dynein and microtubules providing a link between specific cargos, microtubules and dynein. Essential for targeting dynein to microtubule plus ends, recruiting dynein to membranous cargos and enhancing dynein processivity (the ability to move along a microtubule for a long distance without falling off the track). Can also act as a brake to slow the dynein motor during motility along the microtubule. Can regulate microtubule stability by promoting microtubule formation, nucleation and polymerization and by inhibiting microtubule catastrophe in neurons. Inhibits microtubule catastrophe by binding both to microtubules and to tubulin, leading to enhanced microtubule stability along the axon. Plays a role in metaphase spindle orientation. Plays a role in centriole cohesion and subdistal appendage organization and function. Its recruitment to the centriole in a KIF3A-dependent manner is essential for the maintenance of centriole cohesion and the formation of subdistal appendage. Also required for microtubule anchoring at the mother centriole. Plays a role in primary cilia formation. The polypeptide is Dynactin subunit 1 (Dctn1) (Mus musculus (Mouse)).